The sequence spans 672 residues: uncharacterized protein (672 aa).

Belongs to the MG032/MG096/MG288 family.

This is an uncharacterized protein from Mycoplasma pneumoniae (strain ATCC 29342 / M129 / Subtype 1) (Mycoplasmoides pneumoniae).